Consider the following 388-residue polypeptide: MFVRALSLRDFRSWEHVELELSTGRTVFLGANGNGKTNLLEAVGYLATLGSHRVSADAPLIRSGAQRARVGANVVNAGRELRIDVELNQGSANRAQINRSPVRRTREILGILQTVLFAPEDLALVRGDPGERRRFLDELCTARLPRLAGVRADYDRVLRQRSALLKTAGRHARSTADLSTLDVWDGHLAGHAAVLVAQRLRLVHDLFPYLAEAYRSLAPESRPAAIGYRSAYLPGEFLDPARAPRDDDAAALEEIILRELAAARRKELERGVCLVGPHRDELELMLGDTPAKGFASHGESWSFALALRLASFDLLRSTSAEPVLLLDDVFAELDRRRRTALAAVAADAEQVLITAAVPEDVPAELSATPIRVATAGEAGHRTSHIVTG.

Position 30–37 (30–37 (GANGNGKT)) interacts with ATP.

This sequence belongs to the RecF family.

The protein localises to the cytoplasm. In terms of biological role, the RecF protein is involved in DNA metabolism; it is required for DNA replication and normal SOS inducibility. RecF binds preferentially to single-stranded, linear DNA. It also seems to bind ATP. This is DNA replication and repair protein RecF from Nocardia farcinica (strain IFM 10152).